The sequence spans 461 residues: Phosphomethylpyrimidine synthase (461 aa).

Substrate contacts are provided by residues asparagine 81, methionine 110, tyrosine 140, histidine 176, 196–198, 237–240, and glutamate 276; these read SRG and DSLR. Zn(2+) is bound at residue histidine 280. Tyrosine 303 provides a ligand contact to substrate. Histidine 344 contributes to the Zn(2+) binding site. [4Fe-4S] cluster-binding residues include cysteine 424, cysteine 427, and cysteine 432.

It belongs to the ThiC family. The cofactor is [4Fe-4S] cluster.

The catalysed reaction is 5-amino-1-(5-phospho-beta-D-ribosyl)imidazole + S-adenosyl-L-methionine = 4-amino-2-methyl-5-(phosphooxymethyl)pyrimidine + CO + 5'-deoxyadenosine + formate + L-methionine + 3 H(+). Its pathway is cofactor biosynthesis; thiamine diphosphate biosynthesis. Its function is as follows. Catalyzes the synthesis of the hydroxymethylpyrimidine phosphate (HMP-P) moiety of thiamine from aminoimidazole ribotide (AIR) in a radical S-adenosyl-L-methionine (SAM)-dependent reaction. This Thermosynechococcus vestitus (strain NIES-2133 / IAM M-273 / BP-1) protein is Phosphomethylpyrimidine synthase.